The chain runs to 132 residues: Large-conductance mechanosensitive channel (132 aa).

3 helical membrane passes run 14–34 (VVDL…VSSL), 38–58 (IITP…LHFG), and 67–87 (GNFI…FMFV).

This sequence belongs to the MscL family. As to quaternary structure, homopentamer.

Its subcellular location is the cell membrane. Channel that opens in response to stretch forces in the membrane lipid bilayer. May participate in the regulation of osmotic pressure changes within the cell. In Bacillus cereus (strain ATCC 10987 / NRS 248), this protein is Large-conductance mechanosensitive channel.